Consider the following 303-residue polypeptide: MYYGFDIGGTKIALGVFDSGRQLQWEKRVPTPRDSYDAFLDAVCELVAEADQRFGCKGSVGIGIPGMPETEDGTLYAANVPAASGKPLRADLSARLDRDVRLDNDANCFALSEAWDDEFTQYPLVMGLILGTGVGGGLIFNGKPITGKSYITGEFGHMRLPVDALTMMGLDFPLRRCGCGQIGCIENYLSGRGFAWLWQHYYHQPLQAPEIIALWEEGDERAQAHVDRYLDLLAVCLGNILTIVDPDLVVIGGGLSNFTAITTQLADRLPRHLLPVARVPRIERARHGDAGGMRGAAFLHLSD.

ATP contacts are provided by residues 4 to 11 (GFDIGGTK) and 133 to 140 (GVGGGLIF). Residues His157, Cys177, Cys179, and Cys184 each coordinate Zn(2+).

The protein belongs to the ROK (NagC/XylR) family. NagK subfamily.

It catalyses the reaction N-acetyl-D-glucosamine + ATP = N-acetyl-D-glucosamine 6-phosphate + ADP + H(+). It participates in cell wall biogenesis; peptidoglycan recycling. Functionally, catalyzes the phosphorylation of N-acetyl-D-glucosamine (GlcNAc) derived from cell-wall degradation, yielding GlcNAc-6-P. The polypeptide is N-acetyl-D-glucosamine kinase (Escherichia fergusonii (strain ATCC 35469 / DSM 13698 / CCUG 18766 / IAM 14443 / JCM 21226 / LMG 7866 / NBRC 102419 / NCTC 12128 / CDC 0568-73)).